A 245-amino-acid polypeptide reads, in one-letter code: Cypemycin N-terminal methyltransferase (245 aa).

The protein belongs to the methyltransferase superfamily.

It catalyses the reaction N-terminal L-alanyl-[cypemycin] + 2 S-adenosyl-L-methionine = N-terminal N,N-dimethyl-L-alanyl-[cypemycin] + 2 S-adenosyl-L-homocysteine + 3 H(+). Involved in the biosynthesis of the lanaridin cypemycin. The enzyme can methylate a variety of oligopeptides, cyclic peptides and the epsilon-amino group of lysine. This chain is Cypemycin N-terminal methyltransferase, found in Streptomyces sp.